A 912-amino-acid polypeptide reads, in one-letter code: Probable dipeptidyl-aminopeptidase B (912 aa).

Over residues 1–25 (MAAEKGESSDEERKPLTRDSMEYRD) the composition is skewed to basic and acidic residues. Disordered stretches follow at residues 1–31 (MAAE…NSLH) and 49–70 (GSTH…SDDG). Residues 1–92 (MAAEKGESSD…GGKPVQKKVK (92 aa)) are Cytoplasmic-facing. Residues 93–113 (IVLGFLLFLCLSGWSLSFVLF) traverse the membrane as a helical; Signal-anchor for type II membrane protein segment. The Vacuolar portion of the chain corresponds to 114–912 (LFGGHESSKT…RAAIWVGLSI (799 aa)). N-linked (GlcNAc...) asparagine glycosylation is found at Asn-130, Asn-210, Asn-346, Asn-569, and Asn-656. The Charge relay system role is filled by Ser-751. Asn-810 carries N-linked (GlcNAc...) asparagine glycosylation. Active-site charge relay system residues include Asp-828 and His-861. A glycan (N-linked (GlcNAc...) asparagine) is linked at Asn-897.

The protein belongs to the peptidase S9B family.

Its subcellular location is the vacuole membrane. It carries out the reaction Release of an N-terminal dipeptide, Xaa-Yaa-|-Zaa-, from a polypeptide, preferentially when Yaa is Pro, provided Zaa is neither Pro nor hydroxyproline.. In terms of biological role, type IV dipeptidyl-peptidase which removes N-terminal dipeptides sequentially from polypeptides having unsubstituted N-termini provided that the penultimate residue is proline. The polypeptide is Probable dipeptidyl-aminopeptidase B (DAPB) (Paracoccidioides lutzii (strain ATCC MYA-826 / Pb01) (Paracoccidioides brasiliensis)).